The chain runs to 185 residues: Ribosome-recycling factor (185 aa).

It belongs to the RRF family.

It localises to the cytoplasm. Functionally, responsible for the release of ribosomes from messenger RNA at the termination of protein biosynthesis. May increase the efficiency of translation by recycling ribosomes from one round of translation to another. The polypeptide is Ribosome-recycling factor (Listeria welshimeri serovar 6b (strain ATCC 35897 / DSM 20650 / CCUG 15529 / CIP 8149 / NCTC 11857 / SLCC 5334 / V8)).